Here is a 422-residue protein sequence, read N- to C-terminus: F-box/FBD/LRR-repeat protein At5g56420 (422 aa).

An F-box domain is found at 5–54 (RDRLSQLPDDFLLQILSWLPTKDVLVTSLLSKRWRFLWTLVPRLNYDLRL). 7 LRR repeats span residues 59–85 (CPRFSQFVDRSLLLHKAPTLESLNIKI), 136–163 (VLKLENITLEDASCYVCFQSLKTLHLLD), 164–189 (VKYLDDQSLPRIISSCSSLEDLVVQR), 193–212 (DNVKVVTVTAPSLKTLSLHK), 214–238 (SQAFEGDDDGFLIDTPKLKRVDIED), 279–304 (LCLITSDAAYPAGTIFSQLVHLELCT), and 305–330 (CAPRWWDLLTRLIEDSPKLRVLKLRQ). The 50-residue stretch at 342–391 (SWKQPALPKCLLFHLETFKWELYEGSQKQKEVATFILKHAIRLKTAIISP) folds into the FBD domain.

This Arabidopsis thaliana (Mouse-ear cress) protein is F-box/FBD/LRR-repeat protein At5g56420.